The sequence spans 140 residues: Putative peptidyl-tRNA hydrolase PTRHD1 (140 aa).

It belongs to the PTH2 family. PTRHD1 subfamily.

It carries out the reaction an N-acyl-L-alpha-aminoacyl-tRNA + H2O = an N-acyl-L-amino acid + a tRNA + H(+). As a putative peptidyl-tRNA hydrolase, it might be involved in releasing tRNAs from the ribosome during protein synthesis. Some evidence, however, suggests that it lacks peptidyl-tRNA hydrolase activity. The protein is Putative peptidyl-tRNA hydrolase PTRHD1 (PTRHD1) of Homo sapiens (Human).